A 450-amino-acid polypeptide reads, in one-letter code: tRNA-2-methylthio-N(6)-dimethylallyladenosine synthase (450 aa).

Positions 14–132 (GEFFIETWGC…FPNYLNEVKK (119 aa)) constitute an MTTase N-terminal domain. The [4Fe-4S] cluster site is built by Cys-23, Cys-59, Cys-93, Cys-169, Cys-173, and Cys-176. In terms of domain architecture, Radical SAM core spans 155–385 (RKNSMKAFVT…VEVVNEISAK (231 aa)). The TRAM domain maps to 388–450 (KAYEGKIEEV…NSFSLTGEEI (63 aa)).

The protein belongs to the methylthiotransferase family. MiaB subfamily. In terms of assembly, monomer. [4Fe-4S] cluster serves as cofactor.

The protein resides in the cytoplasm. The catalysed reaction is N(6)-dimethylallyladenosine(37) in tRNA + (sulfur carrier)-SH + AH2 + 2 S-adenosyl-L-methionine = 2-methylsulfanyl-N(6)-dimethylallyladenosine(37) in tRNA + (sulfur carrier)-H + 5'-deoxyadenosine + L-methionine + A + S-adenosyl-L-homocysteine + 2 H(+). Functionally, catalyzes the methylthiolation of N6-(dimethylallyl)adenosine (i(6)A), leading to the formation of 2-methylthio-N6-(dimethylallyl)adenosine (ms(2)i(6)A) at position 37 in tRNAs that read codons beginning with uridine. In Clostridium botulinum (strain Okra / Type B1), this protein is tRNA-2-methylthio-N(6)-dimethylallyladenosine synthase.